The following is a 448-amino-acid chain: Putative RNA-ligase (448 aa).

This sequence belongs to the asfivirus M448R family.

It localises to the virion. The polypeptide is Putative RNA-ligase (Ornithodoros (relapsing fever ticks)).